Here is a 499-residue protein sequence, read N- to C-terminus: Endoglucanase (499 aa).

The first 29 residues, 1 to 29 (MKRSISIFITCLLITLLTMGGMLASPASA), serve as a signal peptide directing secretion. Substrate is bound by residues H65, 69–70 (WY), Y96, and H131. The active-site Proton donor is E169. Y231 lines the substrate pocket. The active-site Nucleophile is E257. Residues 263-264 (AS), W291, and 296-298 (KQE) each bind substrate. The CBM3 domain maps to 350–499 (QENGISVQYR…GKLIWGTEPN (150 aa)).

It belongs to the glycosyl hydrolase 5 (cellulase A) family.

The catalysed reaction is Endohydrolysis of (1-&gt;4)-beta-D-glucosidic linkages in cellulose, lichenin and cereal beta-D-glucans.. This is Endoglucanase (bglC) from Bacillus subtilis.